Consider the following 143-residue polypeptide: Glutamyl-tRNA(Gln) amidotransferase subunit C, chloroplastic/mitochondrial (143 aa).

It belongs to the GatC family. In terms of assembly, subunit of the heterotrimeric GatCAB amidotransferase (AdT) complex, composed of A, B and C subunits.

The protein localises to the mitochondrion. The protein resides in the plastid. It localises to the chloroplast. The enzyme catalyses L-glutamyl-tRNA(Gln) + L-glutamine + ATP + H2O = L-glutaminyl-tRNA(Gln) + L-glutamate + ADP + phosphate + H(+). Allows the formation of correctly charged Gln-tRNA(Gln) through the transamidation of misacylated Glu-tRNA(Gln) in chloroplasts and mitochondria. The reaction takes place in the presence of glutamine and ATP through an activated gamma-phospho-Glu-tRNA(Gln). The sequence is that of Glutamyl-tRNA(Gln) amidotransferase subunit C, chloroplastic/mitochondrial from Ricinus communis (Castor bean).